The primary structure comprises 245 residues: MHNYKLTIQYDGARFKGWQRLGNNDNTIQGKIESVISEMVGKETEIIGCSRTDAGVHALNQVANFQSDEKLVEHKVKKYLNQYLPNDISITNVEEVHDRFHARYNSKAKTYLYKIWNEEHTNPFMRKYSMHVNKKLNVKSMKEAAKHLVGSHDFTAFSNAKSKKKSMVREVYTLEVMEEAGFVQIRVSGNGFLHNMVRKIVGALIEVGLGQLDAEAIPQILEAKQRNQINCLAEASGLYLENVEF.

Catalysis depends on Asp-53, which acts as the Nucleophile. Residue Tyr-111 coordinates substrate.

The protein belongs to the tRNA pseudouridine synthase TruA family. As to quaternary structure, homodimer.

The catalysed reaction is uridine(38/39/40) in tRNA = pseudouridine(38/39/40) in tRNA. Formation of pseudouridine at positions 38, 39 and 40 in the anticodon stem and loop of transfer RNAs. The chain is tRNA pseudouridine synthase A 2 from Bacillus cereus (strain ATCC 10987 / NRS 248).